The chain runs to 482 residues: Reduced viability upon starvation protein 167 (482 aa).

The residue at position 2 (Ser2) is an N-acetylserine. Positions 17-254 (FRQKFKMGEQ…YFDLNSDIVE (238 aa)) constitute a BAR domain. 2 coiled-coil regions span residues 31–64 (VYEDAERRFQELEQETKKLSEESKRYSTAVNGML) and 174–204 (AKDEERLYKAQAQVEVAQQEYDYYNDLLKTQ). A Glycyl lysine isopeptide (Lys-Gly) (interchain with G-Cter in ubiquitin) cross-link involves residue Lys242. Ser299, Ser321, and Ser379 each carry phosphoserine; by FUS3 and PHO85. Residues 382 to 407 (LTGLGFQQSPQQQQGPPPAYSNPLTS) form a disordered region. Residues 421–482 (PGVETVTALY…PGNYVQLNKN (62 aa)) enclose the SH3 domain. Lys481 is covalently cross-linked (Glycyl lysine isopeptide (Lys-Gly) (interchain with G-Cter in ubiquitin)).

As to quaternary structure, binds to actin. Interacts with ABP1, GYL1, GYP5, PCL2 and YBR108W. Phosphorylated redundantly by cyclin-dependent kinase PHO85 in association with PCL1,2-type cyclins or by MAP kinase FUS3. Phosphorylation inhibits interaction with complexes involved in actin cytoskeleton function.

Its subcellular location is the cytoplasm. The protein resides in the cytoskeleton. Its function is as follows. Component of a cytoskeletal structure that is required for the formation of endocytic vesicles at the plasma membrane level. Could be implicated in cytoskeletal reorganization in response to environmental stresses and could act in the budding site selection mechanism. This is Reduced viability upon starvation protein 167 (RVS167) from Saccharomyces cerevisiae (strain ATCC 204508 / S288c) (Baker's yeast).